Consider the following 231-residue polypeptide: MAKLDFDALNSTIRYLMFSVFAVAPGELGEDRADVIDEAATFLKQQEDKGVVVRGLYDVAGLRADADFMIWTHADNVEALQSTYSDFRRTTALGRISDPVWSSVALHRPAEFNKSHIPAFLAGEEPGNYICVYPFVRSYEWYLLPDEERRRMLSEHGMAARGYKDVRANTVPAFALGDYEWILAFEAPELHRIVDLMRDLRATDARRHTREETPFFTGPRISVENLIAKLP.

An Isoglutamyl lysine isopeptide (Lys-Gln) (interchain with Q-Cter in protein Pup) cross-link involves residue lysine 44. Residue tyrosine 133 is part of the active site. Fe-coproporphyrin III is bound at residue histidine 156.

This sequence belongs to the ChdC family. Type 2 subfamily. It depends on Fe-coproporphyrin III as a cofactor.

It catalyses the reaction Fe-coproporphyrin III + 2 H2O2 + 2 H(+) = heme b + 2 CO2 + 4 H2O. It carries out the reaction Fe-coproporphyrin III + H2O2 + H(+) = harderoheme III + CO2 + 2 H2O. The catalysed reaction is harderoheme III + H2O2 + H(+) = heme b + CO2 + 2 H2O. It participates in porphyrin-containing compound metabolism; protoheme biosynthesis. Functionally, involved in coproporphyrin-dependent heme b biosynthesis. Catalyzes the decarboxylation of Fe-coproporphyrin III (coproheme) to heme b (protoheme IX), the last step of the pathway. The reaction occurs in a stepwise manner with a three-propionate intermediate. The polypeptide is Coproheme decarboxylase (Mycolicibacterium smegmatis (strain ATCC 700084 / mc(2)155) (Mycobacterium smegmatis)).